Here is a 233-residue protein sequence, read N- to C-terminus: uncharacterized protein (233 aa).

This sequence belongs to the asfivirus H233R family.

This is an uncharacterized protein from African swine fever virus (isolate Tick/Malawi/Lil 20-1/1983) (ASFV).